We begin with the raw amino-acid sequence, 294 residues long: Ribosomal RNA small subunit methyltransferase H (294 aa).

S-adenosyl-L-methionine is bound by residues 36–38 (GGH), Asp55, Phe82, Asp97, and Gln104. Residues 265-285 (KPTVATDDEQNRNPRSRSAKW) form a disordered region.

It belongs to the methyltransferase superfamily. RsmH family.

The protein localises to the cytoplasm. The enzyme catalyses cytidine(1402) in 16S rRNA + S-adenosyl-L-methionine = N(4)-methylcytidine(1402) in 16S rRNA + S-adenosyl-L-homocysteine + H(+). In terms of biological role, specifically methylates the N4 position of cytidine in position 1402 (C1402) of 16S rRNA. This Synechococcus sp. (strain CC9902) protein is Ribosomal RNA small subunit methyltransferase H.